The sequence spans 58 residues: Small ribosomal subunit protein bS21 (58 aa).

The interval 24–58 (TKAGTLQEARKREHYEKPSVKRKRKSEAARKRKKI) is disordered. The span at 31 to 42 (EARKREHYEKPS) shows a compositional bias: basic and acidic residues. The segment covering 43 to 58 (VKRKRKSEAARKRKKI) has biased composition (basic residues).

This sequence belongs to the bacterial ribosomal protein bS21 family.

The sequence is that of Small ribosomal subunit protein bS21 from Streptococcus thermophilus (strain CNRZ 1066).